The primary structure comprises 276 residues: D-aminoacyl-tRNA deacylase (276 aa).

This sequence belongs to the DtdA deacylase family. Monomer. Requires Zn(2+) as cofactor.

The enzyme catalyses a D-aminoacyl-tRNA + H2O = a tRNA + a D-alpha-amino acid + H(+). It catalyses the reaction glycyl-tRNA(Ala) + H2O = tRNA(Ala) + glycine + H(+). D-aminoacyl-tRNA deacylase with broad substrate specificity. By recycling D-aminoacyl-tRNA to D-amino acids and free tRNA molecules, this enzyme counteracts the toxicity associated with the formation of D-aminoacyl-tRNA entities in vivo. This Korarchaeum cryptofilum (strain OPF8) protein is D-aminoacyl-tRNA deacylase.